The chain runs to 548 residues: Membrane protein insertase YidC (548 aa).

Residues 6–26 (NLLVIALLFVSFMIWQAWEQD) form a helical membrane-spanning segment. The segment at 28 to 55 (NPQPQAQQTTQTTTTAAGSAADQGVPAS) is disordered. The segment covering 30-50 (QPQAQQTTQTTTTAAGSAADQ) has biased composition (low complexity). Transmembrane regions (helical) follow at residues 350-370 (FVGN…GIMY), 420-440 (LGGC…YYML), 458-478 (LSAQ…MFFI), and 499-519 (PVIF…YYIV).

Belongs to the OXA1/ALB3/YidC family. Type 1 subfamily. In terms of assembly, interacts with the Sec translocase complex via SecD. Specifically interacts with transmembrane segments of nascent integral membrane proteins during membrane integration.

The protein localises to the cell inner membrane. Its function is as follows. Required for the insertion and/or proper folding and/or complex formation of integral membrane proteins into the membrane. Involved in integration of membrane proteins that insert both dependently and independently of the Sec translocase complex, as well as at least some lipoproteins. Aids folding of multispanning membrane proteins. The protein is Membrane protein insertase YidC of Escherichia coli (strain K12 / MC4100 / BW2952).